The chain runs to 99 residues: Glycine-rich protein (99 aa).

The first 18 residues, 1–18 (MKSMIAVLLLALVATSMA), serve as a signal peptide directing secretion.

The protein belongs to the non-disulfide-bridged peptide (NDBP) superfamily. Expressed by the venom gland.

It localises to the secreted. In Lychas mucronatus (Chinese swimming scorpion), this protein is Glycine-rich protein.